A 545-amino-acid chain; its full sequence is MLPINNNFSLPQNSFYNTISGTYADYFSAWDKWEKQALPGEERDEAVSRLKECLINNSDELRLDRLNLSSLPDNLPAQITLLNVSYNQLTNLPELPVTLKKLYSASNKLSELPVLPPALESLQVQHNELENLPALPDSLLTMNISYNEIVSLPSLPQALKNLRATRNFLTELPAFSEGNNPVVREYFFDRNQISHIPESILNLRNECSIHISDNPLSSHALQALQRLTSSPDYHGPRIYFSMSDGQQNTLHRPLADAVTAWFPENKQSDVSQIWHAFEHEEHANTFSAFLDRLSDTVSARNTSGFREQVAAWLEKLSASAELRQQSFAVAADATESCEDRVALTWNNLRKTLLVHQASEGLFDNDTGALLSLGREMFRLEILEDIARDKVRTLHFVDEIEVYLAFQTMLAEKLQLSTAVKEMRFYGVSGVTANDLRTAEAMVRSREENEFTDWFSLWGPWHAVLKRTEADRWAQAEEQKYEMLENEYSQRVADRLKASGLSGDADAEREAGAQVMRETEQQIYRQLTDEVLALRLSENGSQLHHS.

Positions 1–242 are interaction with target proteins; the sequence is MLPINNNFSL…YHGPRIYFSM (242 aa). LRR repeat units lie at residues 57-77, 78-99, 100-117, 118-139, 140-157, 158-179, 182-203, and 205-228; these read NSDE…NLPA, QITL…PVTL, KKLY…VLPP, ALES…PDSL, LTMN…SLPQ, ALKN…SEGN, VVRE…ILNL, and NECS…QRLT. Residues 243–250 are linker; sequence SDGQQNTL. The interval 251-545 is E3 ubiquitin-protein ligase catalytic domain; the sequence is HRPLADAVTA…SENGSQLHHS (295 aa). Residues 253–545 form the NEL domain; the sequence is PLADAVTAWF…SENGSQLHHS (293 aa). Cysteine 337 serves as the catalytic Glycyl thioester intermediate.

This sequence belongs to the LRR-containing bacterial E3 ligase family. As to quaternary structure, also interacts with human and mouse U2AF1 (U2AF35). In terms of processing, ubiquitinated in the presence of host E1 ubiquitin-activating enzyme, E2 ubiquitin-conjugating enzyme and ubiquitin.

The protein resides in the secreted. Its subcellular location is the host cytoplasm. The protein localises to the host nucleus. The enzyme catalyses S-ubiquitinyl-[E2 ubiquitin-conjugating enzyme]-L-cysteine + [acceptor protein]-L-lysine = [E2 ubiquitin-conjugating enzyme]-L-cysteine + N(6)-ubiquitinyl-[acceptor protein]-L-lysine.. With respect to regulation, exists in an autoinhibited state in the absence of substrate protein, due to interactions of the leucine-rich repeats with NEL domain. Is activated upon binding to a substrate protein. Functionally, effector E3 ubiquitin ligase that interferes with host's ubiquitination pathway and modulates the acute inflammatory responses, thus facilitating bacterial colonization within the host cell. Interacts with IKBKG (NEMO) and TNIP1 (ABIN-1), a ubiquitin-binding adapter protein, which results in TNIP1-dependent 'Lys-27'-linked polyubiquitination of IKBKG. Consequently, polyubiquitinated IKBKG undergoes proteasome-dependent degradation, which perturbs NF-kappa-B activation during bacterial infection. Mediates polyubiquitination of host U2AF1, leading to its proteasomal degradation. Catalyzes 'Lys-48'-linked polyubiquitination and subsequent degradation of a subset of host guanylate-binding proteins (GBP1, GBP2, GBP4 and GBP6), thereby suppressing host cell defense. In contrast, host GBP3 and GBP7 are not ubiquitinated by IpaH9.8. Uses UBE2D2 (UBCH5B) as an E2 ubiquitin-conjugating enzyme. The sequence is that of E3 ubiquitin-protein ligase ipaH9.8 (ipaH9.8) from Shigella sonnei (strain Ss046).